Here is a 149-residue protein sequence, read N- to C-terminus: Large ribosomal subunit protein bL9 (149 aa).

It belongs to the bacterial ribosomal protein bL9 family.

Binds to the 23S rRNA. In Syntrophus aciditrophicus (strain SB), this protein is Large ribosomal subunit protein bL9.